Consider the following 398-residue polypeptide: Argininosuccinate synthase (398 aa).

ATP-binding positions include 9–17 (AYSGGVDTS) and Ala-37. Tyr-88 provides a ligand contact to L-citrulline. ATP is bound at residue Gly-118. Residues Thr-120, Asn-124, and Asp-125 each contribute to the L-aspartate site. Asn-124 serves as a coordination point for L-citrulline. L-citrulline-binding residues include Arg-128, Ser-176, Ser-185, Glu-261, and Tyr-273.

The protein belongs to the argininosuccinate synthase family. Type 1 subfamily. In terms of assembly, homotetramer.

The protein resides in the cytoplasm. The enzyme catalyses L-citrulline + L-aspartate + ATP = 2-(N(omega)-L-arginino)succinate + AMP + diphosphate + H(+). It functions in the pathway amino-acid biosynthesis; L-arginine biosynthesis; L-arginine from L-ornithine and carbamoyl phosphate: step 2/3. This is Argininosuccinate synthase from Gloeobacter violaceus (strain ATCC 29082 / PCC 7421).